The primary structure comprises 707 residues: Polyribonucleotide nucleotidyltransferase (707 aa).

Mg(2+)-binding residues include Asp484 and Asp490. The 60-residue stretch at 551-610 (PRVVRMVVNPEKIRDIIGPAGKTITKIISETGVKIDIEEDGRLYITAPNLEAGERAKQMI) folds into the KH domain. The region spanning 620 to 688 (GGIYLGKVLR…KLGRIVLSRK (69 aa)) is the S1 motif domain. The tract at residues 688–707 (KDAMPDEEESDNRKSDNRKK) is disordered. Over residues 698–707 (DNRKSDNRKK) the composition is skewed to basic and acidic residues.

Belongs to the polyribonucleotide nucleotidyltransferase family. Mg(2+) serves as cofactor.

It is found in the cytoplasm. It carries out the reaction RNA(n+1) + phosphate = RNA(n) + a ribonucleoside 5'-diphosphate. In terms of biological role, involved in mRNA degradation. Catalyzes the phosphorolysis of single-stranded polyribonucleotides processively in the 3'- to 5'-direction. This is Polyribonucleotide nucleotidyltransferase from Caldanaerobacter subterraneus subsp. tengcongensis (strain DSM 15242 / JCM 11007 / NBRC 100824 / MB4) (Thermoanaerobacter tengcongensis).